The following is a 630-amino-acid chain: Plastin-3 (630 aa).

2 EF-hand domains span residues 12-47 (DELDELKEAFAKVDLNSNGFICDYELHELFKEANMP) and 52-87 (KVREIIQKLMLDGDRNKDGKISFDEFVYIFQEVKSS). Ca(2+)-binding residues include D25, N27, N29, E36, D65, N67, D69, K71, and E76. 2 actin-binding regions span residues 109–382 (TSEL…ALTK) and 383–627 (PENQ…GRGM). 2 consecutive Calponin-homology (CH) domains span residues 123-239 (EEEK…KIGL) and 267-378 (LSPE…NKYP). 4 positions are modified to phosphoserine: S268, S293, S326, and S339. At T391 the chain carries Phosphothreonine. Calponin-homology (CH) domains are found at residues 397 to 506 (TREE…RRYT) and 518 to 627 (KAND…GRGM).

As to quaternary structure, monomer.

The protein resides in the cytoplasm. Functionally, actin-bundling protein. The protein is Plastin-3 (PLS3) of Bos taurus (Bovine).